Here is a 539-residue protein sequence, read N- to C-terminus: Chaperonin GroEL (539 aa).

ATP is bound by residues 29-32 (TLGP), 86-90 (DGTTT), Gly-413, 479-481 (DAL), and Asp-495.

It belongs to the chaperonin (HSP60) family. In terms of assembly, forms a cylinder of 14 subunits composed of two heptameric rings stacked back-to-back. Interacts with the co-chaperonin GroES.

The protein localises to the cytoplasm. It carries out the reaction ATP + H2O + a folded polypeptide = ADP + phosphate + an unfolded polypeptide.. Together with its co-chaperonin GroES, plays an essential role in assisting protein folding. The GroEL-GroES system forms a nano-cage that allows encapsulation of the non-native substrate proteins and provides a physical environment optimized to promote and accelerate protein folding. The sequence is that of Chaperonin GroEL from Thermosipho africanus (strain TCF52B).